A 689-amino-acid chain; its full sequence is Glycine--tRNA ligase beta subunit (689 aa).

It belongs to the class-II aminoacyl-tRNA synthetase family. In terms of assembly, tetramer of two alpha and two beta subunits.

Its subcellular location is the cytoplasm. The catalysed reaction is tRNA(Gly) + glycine + ATP = glycyl-tRNA(Gly) + AMP + diphosphate. This chain is Glycine--tRNA ligase beta subunit, found in Yersinia pseudotuberculosis serotype O:1b (strain IP 31758).